The following is a 130-amino-acid chain: Protein 7.7 (130 aa).

In Escherichia phage T7 (Bacteriophage T7), this protein is Protein 7.7.